We begin with the raw amino-acid sequence, 506 residues long: Tyrosine-protein kinase FRK (506 aa).

An SH3 domain is found at 43–111 (SQGQYFVALF…PSNYVAEDRS (69 aa)). The 93-residue stretch at 117–209 (WFFGAIKRAD…GLCVKLEKPC (93 aa)) folds into the SH2 domain. T179 carries the post-translational modification Phosphothreonine. One can recognise a Protein kinase domain in the interval 235–492 (IQLLKRLGSG…TLHWKLEDYF (258 aa)). ATP is bound by residues 241 to 249 (LGSGQFGEV) and K263. Residue D355 is the Proton acceptor of the active site. Y388 bears the Phosphotyrosine; by autocatalysis mark.

Belongs to the protein kinase superfamily. Tyr protein kinase family. SRC subfamily. As to quaternary structure, interacts (via the SH3-domain) with PTEN. Interacts with RB1. Highly expressed in stomach, small intestine and colon. Concentrated in the brush border membranes of epithelial cells, throughout the maturation axis of the adult small intestine.

It localises to the cytoplasm. The protein resides in the nucleus. It carries out the reaction L-tyrosyl-[protein] + ATP = O-phospho-L-tyrosyl-[protein] + ADP + H(+). In terms of biological role, non-receptor tyrosine-protein kinase that negatively regulates cell proliferation. Positively regulates PTEN protein stability through phosphorylation of PTEN on 'Tyr-336', which in turn prevents its ubiquitination and degradation, possibly by reducing its binding to NEDD4. May function as a tumor suppressor. In Rattus norvegicus (Rat), this protein is Tyrosine-protein kinase FRK (Frk).